Consider the following 304-residue polypeptide: Cyclin-dependent kinase 3 (304 aa).

One can recognise a Protein kinase domain in the interval 4–286 (FQKVEKIGEG…AKTALAHPYF (283 aa)). ATP is bound by residues 10–18 (IGEGTYGVV) and Lys-33. Asp-127 (proton acceptor) is an active-site residue.

This sequence belongs to the protein kinase superfamily. CMGC Ser/Thr protein kinase family. CDC2/CDKX subfamily. As to quaternary structure, interacts with CABLES1 and ATF1. Binding to CCNC/cyclin-C promotes RB1 phosphorylation. Binds to CABLES2.

It catalyses the reaction L-seryl-[protein] + ATP = O-phospho-L-seryl-[protein] + ADP + H(+). It carries out the reaction L-threonyl-[protein] + ATP = O-phospho-L-threonyl-[protein] + ADP + H(+). Serine/threonine-protein kinase that plays a critical role in the control of the eukaryotic cell cycle; involved in G0-G1 and G1-S cell cycle transitions. Interacts with CCNC/cyclin-C during interphase. Phosphorylates histone H1, ATF1, RB1 and CABLES1. ATF1 phosphorylation triggers ATF1 transactivation and transcriptional activities, and promotes cell proliferation and transformation. CDK3/cyclin-C mediated RB1 phosphorylation is required for G0-G1 transition. Promotes G1-S transition probably by contributing to the activation of E2F1, E2F2 and E2F3 in a RB1-independent manner. In Mus musculus (Mouse), this protein is Cyclin-dependent kinase 3 (Cdk3).